We begin with the raw amino-acid sequence, 314 residues long: 4-hydroxy-3-methylbut-2-enyl diphosphate reductase (314 aa).

A [4Fe-4S] cluster-binding site is contributed by Cys-12. Residues His-41 and His-74 each contribute to the (2E)-4-hydroxy-3-methylbut-2-enyl diphosphate site. Dimethylallyl diphosphate-binding residues include His-41 and His-74. The isopentenyl diphosphate site is built by His-41 and His-74. Cys-96 lines the [4Fe-4S] cluster pocket. A (2E)-4-hydroxy-3-methylbut-2-enyl diphosphate-binding site is contributed by His-124. His-124 is a dimethylallyl diphosphate binding site. Position 124 (His-124) interacts with isopentenyl diphosphate. The Proton donor role is filled by Glu-126. A (2E)-4-hydroxy-3-methylbut-2-enyl diphosphate-binding site is contributed by Thr-167. Cys-197 is a binding site for [4Fe-4S] cluster. Residues Ser-225, Ser-226, Asn-227, and Ser-269 each contribute to the (2E)-4-hydroxy-3-methylbut-2-enyl diphosphate site. Positions 225, 226, 227, and 269 each coordinate dimethylallyl diphosphate. Ser-225, Ser-226, Asn-227, and Ser-269 together coordinate isopentenyl diphosphate.

Belongs to the IspH family. [4Fe-4S] cluster is required as a cofactor.

The enzyme catalyses isopentenyl diphosphate + 2 oxidized [2Fe-2S]-[ferredoxin] + H2O = (2E)-4-hydroxy-3-methylbut-2-enyl diphosphate + 2 reduced [2Fe-2S]-[ferredoxin] + 2 H(+). The catalysed reaction is dimethylallyl diphosphate + 2 oxidized [2Fe-2S]-[ferredoxin] + H2O = (2E)-4-hydroxy-3-methylbut-2-enyl diphosphate + 2 reduced [2Fe-2S]-[ferredoxin] + 2 H(+). The protein operates within isoprenoid biosynthesis; dimethylallyl diphosphate biosynthesis; dimethylallyl diphosphate from (2E)-4-hydroxy-3-methylbutenyl diphosphate: step 1/1. It participates in isoprenoid biosynthesis; isopentenyl diphosphate biosynthesis via DXP pathway; isopentenyl diphosphate from 1-deoxy-D-xylulose 5-phosphate: step 6/6. Functionally, catalyzes the conversion of 1-hydroxy-2-methyl-2-(E)-butenyl 4-diphosphate (HMBPP) into a mixture of isopentenyl diphosphate (IPP) and dimethylallyl diphosphate (DMAPP). Acts in the terminal step of the DOXP/MEP pathway for isoprenoid precursor biosynthesis. The protein is 4-hydroxy-3-methylbut-2-enyl diphosphate reductase of Glaesserella parasuis serovar 5 (strain SH0165) (Haemophilus parasuis).